Consider the following 834-residue polypeptide: Probable glucan 1,3-beta-glucosidase D (834 aa).

Residues 1-33 (MPSHSRSRDRYGGRDSDREARYDYDYARRRYAT) show a composition bias toward basic and acidic residues. Disordered regions lie at residues 1-188 (MPSH…ASHL) and 200-251 (QYEK…TKAR). At 1 to 306 (MPSHSRSRDR…GGRPFWKRKK (306 aa)) the chain is on the cytoplasmic side. Acidic residues predominate over residues 34–45 (DDNDDDYDDDEL). Composition is skewed to basic and acidic residues over residues 46 to 76 (EHGLNERRYRRDGYLPPRESRTRGYYERDAE), 98 to 173 (YGHD…ETAA), 201 to 218 (YEKEERRKRENAKDAAKA), and 228 to 245 (VVGEESRALRDPPGESHR). The helical; Signal-anchor for type II membrane protein transmembrane segment at 307-327 (WIGLGALILILVIVIPVAVVV) threads the bilayer. The Extracellular segment spans residues 328-834 (SKKHDNKSDP…PDFGNLPEYY (507 aa)). Residues 331 to 354 (HDNKSDPADPQGTSPGKSNLDGLS) are disordered. Asn-333, Asn-379, Asn-384, Asn-396, Asn-549, Asn-561, and Asn-570 each carry an N-linked (GlcNAc...) asparagine glycan. The active-site Proton donor is the Glu-600. Residues Asn-639, Asn-672, and Asn-692 are each glycosylated (N-linked (GlcNAc...) asparagine). The Nucleophile role is filled by Glu-705.

The protein belongs to the glycosyl hydrolase 5 (cellulase A) family.

It localises to the cell membrane. It catalyses the reaction Successive hydrolysis of beta-D-glucose units from the non-reducing ends of (1-&gt;3)-beta-D-glucans, releasing alpha-glucose.. In terms of biological role, glucosidase involved in the degradation of cellulosic biomass. Active on lichenan. This Neosartorya fischeri (strain ATCC 1020 / DSM 3700 / CBS 544.65 / FGSC A1164 / JCM 1740 / NRRL 181 / WB 181) (Aspergillus fischerianus) protein is Probable glucan 1,3-beta-glucosidase D (exgD).